The following is a 349-amino-acid chain: PhoH-like protein (349 aa).

Residue 147–154 participates in ATP binding; sequence GPAGTGKT.

This sequence belongs to the PhoH family.

It localises to the cytoplasm. This is PhoH-like protein from Mycobacterium leprae (strain TN).